The sequence spans 294 residues: Phosphoprotein (294 aa).

The tract at residues 12–28 (MGNEAAKAAEAFQRSLK) is binding to monomeric RNA-free nucleoprotein. Residues 52–97 (KPTISKSTKVTTPPERRNAWGEKPDTTRNQTEEARNEATLEDTSRL) are disordered. The segment covering 65-97 (PERRNAWGEKPDTTRNQTEEARNEATLEDTSRL) has biased composition (basic and acidic residues). The residue at position 106 (S106) is a Phosphoserine. The binding to host phosphatase PP1 stretch occupies residues 123-128 (KKKVTF). The binding to protein M2-1 stretch occupies residues 135 to 157 (RYTKLEMEALELLSDNEDDDAES). S148, S157, S158, S168, and S171 each carry phosphoserine. The tract at residues 169–194 (ALSLEARLESIDEKLSMILGLLRTLN) is oligomerization and binding to RNA-directed RNA polymerase L. Residues 234-294 (MKEEAKQKSK…PDDDLYSLTM (61 aa)) form a disordered region. The binding to RNA-directed RNA polymerase L stretch occupies residues 251–279 (LTEKAKELNKIVEDESTSGESEEEEEEED). The segment covering 253 to 263 (EKAKELNKIVE) has biased composition (basic and acidic residues). The segment covering 264 to 294 (DESTSGESEEEEEEEDEEESNPDDDLYSLTM) has biased composition (acidic residues). Residues 281–294 (EESNPDDDLYSLTM) form a binding to the N-RNA complex region.

It belongs to the pneumoviridae phosphoprotein P family. As to quaternary structure, homotetramer. Interacts with protein M2-1; the interaction between the two tetramers is required for the anti-termination and elongation transcriptional activities of protein M2-1. Interacts with host phosphatase PP1; this interaction recruits PP1 to the inclusion bodies. Formation of a complex PP1/M2-1/P allows P to target host PP1 phosphatase to the M2-1 substrate. Interacts with the nucleoprotein N; the phosphorylated phosphoprotein P binds to N-RNA complex. Interacts with the monomeric RNA-free nucleoprotein N. Interacts with RNA-directed RNA polymerase L (via N-terminus); the association of P and L forms the polymerase complex. In terms of processing, constitutively phosphorylated by host.

Its subcellular location is the virion. The protein localises to the host cytoplasm. In terms of biological role, plays critical roles in regulating RNA replication and transcription through its interactions with multiple proteins. Tethers the RNA-directed RNA polymerase L to the nucleoprotein-RNA complex. Recruits the M2-1 protein, a processivity factor that is required for efficient transcription of viral RNA. Acts as a chaperone for neo-synthesized nucleoprotein by forming an N-P complex that preserves N in a monomeric and RNA-free state and prevents the association of nascent N with host cell RNAs. Recruits the host phosphatase PP1 to inclusion bodies to regulate viral transcription. The polypeptide is Phosphoprotein (Avian metapneumovirus (isolate Canada goose/Minnesota/15a/2001) (AMPV)).